Consider the following 357-residue polypeptide: Isopenicillin-N N-acyltransferase (357 aa).

Positions 121 and 310 each coordinate 6-aminopenicillanate.

This sequence belongs to the peptidase C45 family. As to quaternary structure, the active form of the enzyme results from processing of the 40-kDa monomeric precursor to a heterodimer containing subunits of 11 and 29 kDa. In terms of processing, the pre-AAT protein is synthesized as 40 kDa precursor which is then self-processed into an 11 kDa (protein A) and a 29 kDa (protein B). The B protein carries AAT activity.

The protein localises to the peroxisome matrix. It carries out the reaction isopenicillin N + phenylacetyl-CoA + H2O = penicillin G + L-2-aminoadipate + CoA + H(+). Its pathway is antibiotic biosynthesis; penicillin G biosynthesis; penicillin G from L-alpha-aminoadipate and L-cysteine and L-valine: step 3/3. In terms of biological role, isopenicillin-N N-acyltransferase; part of the gene cluster that mediates the biosynthesis of penicillin, the world's most important antibiotic. AatA catalyzes the exchange of the alpha-aminoadipyl side chain of isopenicillin N for phenylacetic acid to yield penicillin. This step occurs in the peroxisomal matrix and the penM and paaT transporters are involved in the isopenicillin N and phenylacetic acid import into the peroxisome, respectively. The penicillin biosynthesis occurs via 3 enzymatic steps, the first corresponding to the production of the tripeptide N-[(5S)-5-amino-5-carboxypentanoyl]-L-cysteinyl-D-valine (LLD-ACV or ACV) by the NRPS acvA. The tripeptide ACV is then cyclized to isopenicillin N (IPN) by the isopenicillin N synthase ipnA that forms the beta-lactam nucleus. Finally, the alpha-aminoadipyl side chain is exchanged for phenylacetic acid by the isopenicillin N acyltransferase aatA to yield penicillin in the peroxisomal matrix. This is Isopenicillin-N N-acyltransferase from Penicillium chrysogenum (Penicillium notatum).